The primary structure comprises 343 residues: UBP1-associated proteins 1A (343 aa).

The tract at residues methionine 1–glutamate 61 is disordered. Residues asparagine 28–serine 49 are compositionally biased toward low complexity. Positions serine 50–glutamate 61 are enriched in acidic residues. An RRM domain is found at arginine 104–methionine 181. The segment at serine 312 to serine 343 is disordered. The segment covering alanine 319–aspartate 330 has biased composition (basic and acidic residues).

As to quaternary structure, interacts with UBA1A, UBA2A, UBP1A, UBP1B and UBP1C.

Its subcellular location is the nucleus. Its function is as follows. Acts as a component of a complex regulating the turnover of mRNAs in the nucleus. Binds with high affinity to RNA molecules that contain U-rich sequences in 3'-UTRs. May function in complex with UBP1 and contribute to the stabilization of mRNAs in the nucleus. However, unlike UBP1, UBA1A does not stimulate pre-mRNA splicing. The sequence is that of UBP1-associated proteins 1A (UBA1A) from Arabidopsis thaliana (Mouse-ear cress).